The primary structure comprises 502 residues: Beta-glucosidase 7 (502 aa).

A signal peptide spans 1-22 (MKPFSQFFVFVVTVSATSYIDA). A beta-D-glucoside is bound by residues Gln42, His140, and 185 to 186 (NE). Glu186 acts as the Proton donor in catalysis. Asn208 is a glycosylation site (N-linked (GlcNAc...) asparagine). Tyr325 is a binding site for a beta-D-glucoside. Asn359 carries an N-linked (GlcNAc...) asparagine glycan. Glu392 serves as a coordination point for a beta-D-glucoside. The active-site Nucleophile is the Glu392. N-linked (GlcNAc...) asparagine glycosylation occurs at Asn425. Positions 435 and 451 each coordinate a beta-D-glucoside. 2 N-linked (GlcNAc...) asparagine glycosylation sites follow: Asn457 and Asn479.

This sequence belongs to the glycosyl hydrolase 1 family.

It carries out the reaction Hydrolysis of terminal, non-reducing beta-D-glucosyl residues with release of beta-D-glucose.. This is Beta-glucosidase 7 from Arabidopsis thaliana (Mouse-ear cress).